Here is a 110-residue protein sequence, read N- to C-terminus: Large ribosomal subunit protein uL22 (110 aa).

It belongs to the universal ribosomal protein uL22 family. Part of the 50S ribosomal subunit.

Functionally, this protein binds specifically to 23S rRNA; its binding is stimulated by other ribosomal proteins, e.g. L4, L17, and L20. It is important during the early stages of 50S assembly. It makes multiple contacts with different domains of the 23S rRNA in the assembled 50S subunit and ribosome. Its function is as follows. The globular domain of the protein is located near the polypeptide exit tunnel on the outside of the subunit, while an extended beta-hairpin is found that lines the wall of the exit tunnel in the center of the 70S ribosome. In Janthinobacterium sp. (strain Marseille) (Minibacterium massiliensis), this protein is Large ribosomal subunit protein uL22.